The sequence spans 323 residues: uncharacterized protein (323 aa).

Disordered stretches follow at residues 185–214 and 271–294; these read AELM…GSSW and GNII…YEKL.

This sequence belongs to the IGBP1/TAP42 family.

This is an uncharacterized protein from Schizosaccharomyces pombe (strain 972 / ATCC 24843) (Fission yeast).